Consider the following 395-residue polypeptide: Tubulin-like protein CetZ1 (395 aa).

Residues Gln-10 to Lys-14, Gly-110 to Gly-112, Glu-142, Asn-169, and Asn-187 contribute to the GTP site.

The protein belongs to the CetZ family.

Its subcellular location is the cytoplasm. Involved in cell shape control. Essential for the development of a rod-shaped cell type required for efficient swimming. In Haloferax volcanii (strain ATCC 29605 / DSM 3757 / JCM 8879 / NBRC 14742 / NCIMB 2012 / VKM B-1768 / DS2) (Halobacterium volcanii), this protein is Tubulin-like protein CetZ1.